Here is a 293-residue protein sequence, read N- to C-terminus: 4-hydroxybenzoate octaprenyltransferase (293 aa).

7 consecutive transmembrane segments (helical) span residues 25 to 45 (IGNFLLLWPMLWGLWIAAKGL), 48 to 68 (LKVLVVFVLGVLIMRAAGCVI), 101 to 121 (LFVVLCLVAFGLVLLMNPLTI), 142 to 162 (HFPQVHLGAAFGWAIPMAFAA), 165 to 185 (GAVAPVAWLLFLSAVLWATIY), 223 to 243 (VMLAVLVAAGLVVGLGAFWYL), and 271 to 291 (FLNNNWLGGLIFLGLLLDLHL).

The protein belongs to the UbiA prenyltransferase family. The cofactor is Mg(2+).

Its subcellular location is the cell inner membrane. The catalysed reaction is all-trans-octaprenyl diphosphate + 4-hydroxybenzoate = 4-hydroxy-3-(all-trans-octaprenyl)benzoate + diphosphate. It functions in the pathway cofactor biosynthesis; ubiquinone biosynthesis. Catalyzes the prenylation of para-hydroxybenzoate (PHB) with an all-trans polyprenyl group. Mediates the second step in the final reaction sequence of ubiquinone-8 (UQ-8) biosynthesis, which is the condensation of the polyisoprenoid side chain with PHB, generating the first membrane-bound Q intermediate 3-octaprenyl-4-hydroxybenzoate. The protein is 4-hydroxybenzoate octaprenyltransferase of Alkalilimnicola ehrlichii (strain ATCC BAA-1101 / DSM 17681 / MLHE-1).